The primary structure comprises 466 residues: 3-isopropylmalate dehydratase large subunit (466 aa).

Cysteine 347, cysteine 407, and cysteine 410 together coordinate [4Fe-4S] cluster.

Belongs to the aconitase/IPM isomerase family. LeuC type 1 subfamily. As to quaternary structure, heterodimer of LeuC and LeuD. The cofactor is [4Fe-4S] cluster.

The enzyme catalyses (2R,3S)-3-isopropylmalate = (2S)-2-isopropylmalate. It participates in amino-acid biosynthesis; L-leucine biosynthesis; L-leucine from 3-methyl-2-oxobutanoate: step 2/4. In terms of biological role, catalyzes the isomerization between 2-isopropylmalate and 3-isopropylmalate, via the formation of 2-isopropylmaleate. The polypeptide is 3-isopropylmalate dehydratase large subunit (Serratia proteamaculans (strain 568)).